We begin with the raw amino-acid sequence, 600 residues long: Methionine--tRNA ligase (600 aa).

The 'HIGH' region signature appears at 11-21 (PYANGPRHIGH). 4 residues coordinate Zn(2+): Cys-143, Cys-146, Cys-156, and Cys-159. The 'KMSKS' region signature appears at 350 to 354 (QFSSS). Residue Ser-353 coordinates ATP.

This sequence belongs to the class-I aminoacyl-tRNA synthetase family. MetG type 1 subfamily. In terms of assembly, monomer. Zn(2+) serves as cofactor.

It localises to the cytoplasm. It catalyses the reaction tRNA(Met) + L-methionine + ATP = L-methionyl-tRNA(Met) + AMP + diphosphate. Its function is as follows. Is required not only for elongation of protein synthesis but also for the initiation of all mRNA translation through initiator tRNA(fMet) aminoacylation. This chain is Methionine--tRNA ligase, found in Kineococcus radiotolerans (strain ATCC BAA-149 / DSM 14245 / SRS30216).